Reading from the N-terminus, the 397-residue chain is Subtilisin-like serine protease Pen ch 13.0101 (397 aa).

Positions 1-19 (MGFLKVLATSLATLAVVDA) are cleaved as a signal peptide. Positions 20–115 (GTLLTASNTD…IEPDMIVNAT (96 aa)) are cleaved as a propeptide — removed in mature form. Residues 35–113 (SYIVVMNDDV…KYIEPDMIVN (79 aa)) form the Inhibitor I9 domain. N113 carries an N-linked (GlcNAc...) asparagine glycan. The 273-residue stretch at 125–397 (SWGLARISSK…SKLLYNGINV (273 aa)) folds into the Peptidase S8 domain. Active-site charge relay system residues include D157 and H188. 2 N-linked (GlcNAc...) asparagine glycosylation sites follow: N249 and N284. Residue S343 is the Charge relay system of the active site.

This sequence belongs to the peptidase S8 family.

The protein resides in the secreted. In terms of biological role, serine protease. This Penicillium rubens protein is Subtilisin-like serine protease Pen ch 13.0101.